The sequence spans 571 residues: Phosphoribosylaminoimidazole carboxylase (571 aa).

The residue at position 37 (S37) is a Phosphoserine. Positions 110-298 (KEHLIKNGIA…QFEAHLRSIL (189 aa)) constitute an ATP-grasp domain. 138–193 (GRDLGFPFVLKSRTLAYDGRGNFVVKNKEMIPEALEVLKDRPLYAEKWAPFTKELA) contributes to the ATP binding site.

The protein in the C-terminal section; belongs to the AIR carboxylase family. Class I subfamily.

It carries out the reaction 5-amino-1-(5-phospho-D-ribosyl)imidazole-4-carboxylate + H(+) = 5-amino-1-(5-phospho-beta-D-ribosyl)imidazole + CO2. It participates in purine metabolism; IMP biosynthesis via de novo pathway; 5-amino-1-(5-phospho-D-ribosyl)imidazole-4-carboxylate from 5-amino-1-(5-phospho-D-ribosyl)imidazole (carboxylase route): step 1/1. This Saccharomyces cerevisiae (strain ATCC 204508 / S288c) (Baker's yeast) protein is Phosphoribosylaminoimidazole carboxylase (ADE2).